The following is an 859-amino-acid chain: Cleavage factor two protein 2 (859 aa).

The segment at 560–611 (PDDSDNVNQNSRKRPLKDGAKTTSPVNEEDNKNEEEDGYNMSDPISKRSKHR) is disordered. The segment covering 586 to 597 (NEEDNKNEEEDG) has biased composition (acidic residues).

As to quaternary structure, component of the cleavage and polyadenylation factor (CPF) complex, which is composed of at least PTI1, SYC1, SSU72, GLC7, MPE1, REF2, PFS2, PTA1, YSH1/BRR5, SWD2, CFT2/YDH1, YTH1, CFT1/YHH1, FIP1 and PAP1. Interacts with the CTD domain of RPB1/RNA polymerase II; the interaction is enhanced upon phosphorylation of the RPB1 CTD domain. Interacts with PCF11.

The protein localises to the nucleus. RNA-binding component of the cleavage and polyadenylation factor (CPF) complex, which plays a key role in polyadenylation-dependent pre-mRNA 3'-end formation and cooperates with cleavage factors including the CFIA complex and NAB4/CFIB. May be involved in poly(A)-site recognition. May be involved in the association of the CPF, CPFIA and RNA polymerase II complexes. This Saccharomyces cerevisiae (strain ATCC 204508 / S288c) (Baker's yeast) protein is Cleavage factor two protein 2 (CFT2).